The sequence spans 1105 residues: Lysylphosphatidylglycerol biosynthesis bifunctional protein LysX (1105 aa).

A phosphatidylglycerol lysyltransferase region spans residues 1 to 603 (MTVTKPRSVQ…LLHHDGSAPD (603 aa)). 7 consecutive transmembrane segments (helical) span residues 20–40 (VPAAAGWAVGVIATLSLLASI), 62–82 (FPDTSFAWSFVLALLAAALAA), 86–106 (IAWLLLLTNVVLAAFLNAADI), 117–137 (FGENLGFAVHVVAIVVLVLGY), 154–174 (AVLVAGGAIGILVSWGLVELF), 186–203 (YVANRVIGFALADPDLFT), and 208–228 (VFLNAMFGLFGALALIAATIV). Residues 604–1105 (VSGLRQSAIA…TLPFPLAKPH (502 aa)) form a lysine--tRNA ligase region. 2 residues coordinate Mg(2+): Asp1017 and Glu1024.

It in the N-terminal section; belongs to the LPG synthetase family. In the C-terminal section; belongs to the class-II aminoacyl-tRNA synthetase family. The cofactor is Mg(2+).

Its subcellular location is the cell membrane. The catalysed reaction is tRNA(Lys) + L-lysine + ATP = L-lysyl-tRNA(Lys) + AMP + diphosphate. It catalyses the reaction L-lysyl-tRNA(Lys) + a 1,2-diacyl-sn-glycero-3-phospho-(1'-sn-glycerol) = a 1,2-diacyl-sn-glycero-3-phospho-1'-(3'-O-L-lysyl)-sn-glycerol + tRNA(Lys). In terms of biological role, catalyzes the production of L-lysyl-tRNA(Lys)transfer and the transfer of a lysyl group from L-lysyl-tRNA(Lys) to membrane-bound phosphatidylglycerol (PG), which produces lysylphosphatidylglycerol (LPG), one of the components of the bacterial membrane with a positive net charge. LPG synthesis contributes to the resistance to cationic antimicrobial peptides (CAMPs) and likely protects M.tuberculosis against the CAMPs produced by competiting microorganisms (bacteriocins). In fact, the modification of anionic phosphatidylglycerol with positively charged L-lysine results in repulsion of the peptides. The protein is Lysylphosphatidylglycerol biosynthesis bifunctional protein LysX (lysX) of Mycobacterium marinum (strain ATCC BAA-535 / M).